Reading from the N-terminus, the 263-residue chain is Uroplakin-3b-like protein 1 (263 aa).

A signal peptide spans 1-33 (MDNSWRLGPAIGLSAGQSQLLVSLLLLLTRVQP). The Extracellular segment spans residues 34–204 (GTDVAAPEHI…PGPQSPGTVV (171 aa)). 3 N-linked (GlcNAc...) asparagine glycosylation sites follow: asparagine 51, asparagine 76, and asparagine 91. The helical transmembrane segment at 205 to 225 (IIAILSILLAVLLTVLLAVLI) threads the bilayer. At 226 to 263 (YTCFNSCRSTSLSGPEEAGSVRRYTTHLAFSTPAEGAS) the chain is on the cytoplasmic side.

This sequence belongs to the uroplakin-3 family.

Its subcellular location is the membrane. The protein is Uroplakin-3b-like protein 1 of Homo sapiens (Human).